A 648-amino-acid chain; its full sequence is DNA mismatch repair protein MutL (648 aa).

The disordered stretch occupies residues 385–430 (STVKGPAVNEPLTENTLNQQKVKTSASTPVVHTGNSVEPKPETSTA). Residues 396–430 (LTENTLNQQKVKTSASTPVVHTGNSVEPKPETSTA) are compositionally biased toward polar residues.

It belongs to the DNA mismatch repair MutL/HexB family.

This protein is involved in the repair of mismatches in DNA. It is required for dam-dependent methyl-directed DNA mismatch repair. May act as a 'molecular matchmaker', a protein that promotes the formation of a stable complex between two or more DNA-binding proteins in an ATP-dependent manner without itself being part of a final effector complex. The protein is DNA mismatch repair protein MutL of Agathobacter rectalis (strain ATCC 33656 / DSM 3377 / JCM 17463 / KCTC 5835 / VPI 0990) (Eubacterium rectale).